The following is a 306-amino-acid chain: Secreted RxLR effector protein 76 (306 aa).

The signal sequence occupies residues 1 to 21; sequence MSGAFYVFTALLLVASDQIAA. Residues 48–65 carry the RxLR-dEER motif; sequence RFLRGSRDEPDNLANEER. Residues 105–142 are disordered; that stretch reads AAKAVKKRPRGAKAGRKMPRAAEAEAVKKVPRAGTAVK. The span at 107–123 shows a compositional bias: basic residues; sequence KAVKKRPRGAKAGRKMP.

It belongs to the RxLR effector family.

The protein localises to the secreted. It localises to the host nucleus. In terms of biological role, secreted effector that partially suppresses the host cell death induced by cell death-inducing proteins. This chain is Secreted RxLR effector protein 76, found in Plasmopara viticola (Downy mildew of grapevine).